The primary structure comprises 104 residues: uncharacterized protein (104 aa).

2 disordered regions span residues 1-48 (MLRR…NNQP) and 66-104 (QENTSSNNNNNNNHGDDENGSRYGHGSSLGGDVHSRRCS).

This is an uncharacterized protein from Saccharomyces cerevisiae (strain ATCC 204508 / S288c) (Baker's yeast).